Here is a 246-residue protein sequence, read N- to C-terminus: Nodulation protein G (246 aa).

8 to 32 is a binding site for NAD(+); the sequence is VTGAMGGLGTAICQALAKDGCIVAA. A substrate-binding site is contributed by Ser-140. Tyr-153 acts as the Proton acceptor in catalysis.

This sequence belongs to the short-chain dehydrogenases/reductases (SDR) family.

Functionally, proposed to modify Nod factor fatty acyl chain. This is Nodulation protein G (nodG) from Azospirillum brasilense.